The chain runs to 158 residues: Hypoxanthine DNA glycosylase (158 aa).

The active site involves Asn39.

It belongs to the uracil-DNA glycosylase (UDG) superfamily. Type 6 (HDG) family.

Its function is as follows. Excises hypoxanthine, a deamination product of adenine, from double-stranded DNA. Acts on double-stranded DNA containing G/I, T/I, A/I and C/I base pairs, but not on single-stranded inosine-containing DNA. Also has minor xanthine DNA glycosylase activity. Lacks any detectable uracil-DNA glycosylase activity. The chain is Hypoxanthine DNA glycosylase from Methanosarcina acetivorans (strain ATCC 35395 / DSM 2834 / JCM 12185 / C2A).